The primary structure comprises 281 residues: Pantothenate synthetase (281 aa).

ATP is bound at residue 30–37; it reads MGNLHQGH. Residue histidine 37 is the Proton donor of the active site. Residue glutamine 61 coordinates (R)-pantoate. Glutamine 61 contacts beta-alanine. ATP is bound at residue 149–152; the sequence is GNKD. Glutamine 155 provides a ligand contact to (R)-pantoate. ATP contacts are provided by residues isoleucine 178 and 186–189; that span reads MSSR.

Belongs to the pantothenate synthetase family. In terms of assembly, homodimer.

Its subcellular location is the cytoplasm. It catalyses the reaction (R)-pantoate + beta-alanine + ATP = (R)-pantothenate + AMP + diphosphate + H(+). It participates in cofactor biosynthesis; (R)-pantothenate biosynthesis; (R)-pantothenate from (R)-pantoate and beta-alanine: step 1/1. Catalyzes the condensation of pantoate with beta-alanine in an ATP-dependent reaction via a pantoyl-adenylate intermediate. This Shewanella sp. (strain ANA-3) protein is Pantothenate synthetase.